The chain runs to 127 residues: Protein translocase subunit SecE (127 aa).

3 helical membrane passes run 16 to 36 (IAKW…NHYY), 42 to 62 (IFQN…IFLT), and 98 to 118 (IIVT…LIWF).

The protein belongs to the SecE/SEC61-gamma family. Component of the Sec protein translocase complex. Heterotrimer consisting of SecY, SecE and SecG subunits. The heterotrimers can form oligomers, although 1 heterotrimer is thought to be able to translocate proteins. Interacts with the ribosome. Interacts with SecDF, and other proteins may be involved. Interacts with SecA.

The protein localises to the cell membrane. Essential subunit of the Sec protein translocation channel SecYEG. Clamps together the 2 halves of SecY. May contact the channel plug during translocation. In Buchnera aphidicola subsp. Baizongia pistaciae (strain Bp), this protein is Protein translocase subunit SecE.